Consider the following 384-residue polypeptide: Tetraacyldisaccharide 4'-kinase (384 aa).

Residue 72–79 (TAGGTGKT) coordinates ATP.

It belongs to the LpxK family.

The catalysed reaction is a lipid A disaccharide + ATP = a lipid IVA + ADP + H(+). It functions in the pathway glycolipid biosynthesis; lipid IV(A) biosynthesis; lipid IV(A) from (3R)-3-hydroxytetradecanoyl-[acyl-carrier-protein] and UDP-N-acetyl-alpha-D-glucosamine: step 6/6. In terms of biological role, transfers the gamma-phosphate of ATP to the 4'-position of a tetraacyldisaccharide 1-phosphate intermediate (termed DS-1-P) to form tetraacyldisaccharide 1,4'-bis-phosphate (lipid IVA). The protein is Tetraacyldisaccharide 4'-kinase of Halothermothrix orenii (strain H 168 / OCM 544 / DSM 9562).